A 145-amino-acid chain; its full sequence is D-aminoacyl-tRNA deacylase (145 aa).

Residues glycine 137 to proline 138 carry the Gly-cisPro motif, important for rejection of L-amino acids motif.

Belongs to the DTD family. Homodimer.

The protein resides in the cytoplasm. It carries out the reaction glycyl-tRNA(Ala) + H2O = tRNA(Ala) + glycine + H(+). The enzyme catalyses a D-aminoacyl-tRNA + H2O = a tRNA + a D-alpha-amino acid + H(+). In terms of biological role, an aminoacyl-tRNA editing enzyme that deacylates mischarged D-aminoacyl-tRNAs. Also deacylates mischarged glycyl-tRNA(Ala), protecting cells against glycine mischarging by AlaRS. Acts via tRNA-based rather than protein-based catalysis; rejects L-amino acids rather than detecting D-amino acids in the active site. By recycling D-aminoacyl-tRNA to D-amino acids and free tRNA molecules, this enzyme counteracts the toxicity associated with the formation of D-aminoacyl-tRNA entities in vivo and helps enforce protein L-homochirality. This is D-aminoacyl-tRNA deacylase from Pseudomonas fluorescens (strain Pf0-1).